The sequence spans 1205 residues: Nitric oxide synthase 3 (1205 aa).

Residues 1–73 (MGNLKSVGQE…PPDGPKFPRV (73 aa)) are disordered. The N-myristoyl glycine moiety is linked to residue glycine 2. 2 S-palmitoyl cysteine lipidation sites follow: cysteine 15 and cysteine 26. The span at 15 to 27 (CGLGLGLGLGLCG) shows a compositional bias: gly residues. Residues 44-54 (LAPPPSPPPAP) are compositionally biased toward pro residues. 2 residues coordinate Zn(2+): cysteine 96 and cysteine 101. Positions 100–488 (RCLGSLVFPR…TDPWKGSASK (389 aa)) are interaction with NOSIP. A (6R)-L-erythro-5,6,7,8-tetrahydrobiopterin-binding site is contributed by serine 104. Phosphoserine; by CDK5 is present on serine 116. Residue cysteine 186 participates in heme b binding. L-arginine contacts are provided by glutamine 249, tryptophan 358, tyrosine 359, glutamate 363, and asparagine 368. (6R)-L-erythro-5,6,7,8-tetrahydrobiopterin is bound by residues alanine 448, tryptophan 449, and phenylalanine 462. Tyrosine 477 lines the heme b pocket. The segment at 492–512 (VTRKKTFKEVANAVKISASLM) is calmodulin-binding. The residue at position 497 (threonine 497) is a Phosphothreonine; by AMPK. The Flavodoxin-like domain maps to 522–705 (ATILYGSETG…AFGGWAQAAF (184 aa)). FMN is bound by residues serine 528, glutamate 529, threonine 530, arginine 532, serine 574, and threonine 575. 3 positions are modified to phosphoserine: serine 617, serine 635, and serine 640. FMN-binding residues include serine 656, cysteine 663, glutamate 689, and glutamine 693. One can recognise an FAD-binding FR-type domain in the interval 758–1004 (RKMVQATVLA…IRGAPSFRLP (247 aa)). Arginine 778 serves as a coordination point for NADP(+). Histidine 800 contacts FAD. A disordered region spans residues 819–850 (VEDPPPPGEPVAVEQLEKGSPGGPPPSWVRDP). Position 838 is a phosphoserine (serine 838). FAD contacts are provided by arginine 940, tyrosine 942, serine 943, threonine 958, alanine 960, tyrosine 964, valine 977, cysteine 978, and serine 979. NADP(+)-binding residues include threonine 1018, arginine 1051, serine 1080, arginine 1081, lysine 1087, tyrosine 1089, and glutamine 1091. Position 1177 is a phosphothreonine (threonine 1177). Position 1179 is a phosphoserine; by AMPK (serine 1179). Position 1181 is a phosphoserine (serine 1181).

This sequence belongs to the NOS family. As to quaternary structure, homodimer. Interacts with NOSIP and NOSTRIN. Interacts with HSP90AB1. Forms a complex with ASL, ASS1 and SLC7A1; the complex regulates cell-autonomous L-arginine synthesis and citrulline recycling while channeling extracellular L-arginine to nitric oxide synthesis pathway. The cofactor is heme b. FAD is required as a cofactor. Requires FMN as cofactor. It depends on (6R)-L-erythro-5,6,7,8-tetrahydrobiopterin as a cofactor. Phosphorylation by AMPK at Ser-1179 in the presence of Ca(2+)-calmodulin (CaM) activates activity. In absence of Ca(2+)-calmodulin, AMPK also phosphorylates Thr-497, resulting in inhibition of activity. Phosphorylation of Ser-116 by CDK5 reduces activity.

It localises to the membrane. The protein resides in the caveola. It is found in the cytoplasm. Its subcellular location is the cytoskeleton. The protein localises to the golgi apparatus. It localises to the cell membrane. It catalyses the reaction 2 L-arginine + 3 NADPH + 4 O2 + H(+) = 2 L-citrulline + 2 nitric oxide + 3 NADP(+) + 4 H2O. Its activity is regulated as follows. Stimulated by calcium/calmodulin. Inhibited by NOSIP and NOSTRIN. Produces nitric oxide (NO) which is implicated in vascular smooth muscle relaxation through a cGMP-mediated signal transduction pathway. NO mediates vascular endothelial growth factor (VEGF)-induced angiogenesis in coronary vessels and promotes blood clotting through the activation of platelets. The protein is Nitric oxide synthase 3 (NOS3) of Canis lupus familiaris (Dog).